A 114-amino-acid polypeptide reads, in one-letter code: uncharacterized protein (114 aa).

This is an uncharacterized protein from Acanthamoeba polyphaga mimivirus (APMV).